Consider the following 171-residue polypeptide: Co-chaperone protein HscB (171 aa).

Residues 2–74 (DYFTFFGLPA…LMRAEYLLSL (73 aa)) form the J domain.

This sequence belongs to the HscB family. In terms of assembly, interacts with HscA and stimulates its ATPase activity. Interacts with IscU.

Functionally, co-chaperone involved in the maturation of iron-sulfur cluster-containing proteins. Seems to help targeting proteins to be folded toward HscA. This is Co-chaperone protein HscB from Shigella sonnei (strain Ss046).